Here is a 609-residue protein sequence, read N- to C-terminus: MKWVESIFLIFLLNFTESRTLHRNEYGIASILDSYQCTAEINLTDLATIFFAQFVQEATYKEVSKMVKDALTAIEKPTGDEQSAGCLENQLPAFLEELCREKEILEKYGHSDCCSQSEEGRHNCFLAHKKPTPASIPFFQVPEPVTSCEAYEEDRETFMNKFIYEIARRHPFLYAPTILLWAARYDKIIPSCCKAENAVECFQTKAATVTKELRESSLLNQHACAVMKNFGTRTFQAITVTKLSQKFTKVNFTEIQKLVLDVAHVHEHCCRGDVLDCLQDGEKIMSYICSQQDTLSNKITECCKLTTLERGQCIIHAENDEKPEGLSPNLNRFLGDRDFNQFSSGEKNIFLASFVHEYSRRHPQLAVSVILRVAKGYQELLEKCFQTENPLECQDKGEEELQKYIQESQALAKRSCGLFQKLGEYYLQNAFLVAYTKKAPQLTSSELMAITRKMAATAATCCQLSEDKLLACGEGAADIIIGHLCIRHETTPVNPGVGQCCTSSYANRRPCFSSLVVDETYVPPAFSDDKFIFHKDLCQAQGVALQTMKQEFLINLVKQKPQITEEQLEAVIADFSGLLEKCCQGQEQEVCFAEEGQKLISKTRAALGV.

The N-terminal stretch at 1–18 (MKWVESIFLIFLLNFTES) is a signal peptide. Albumin domains are found at residues 19-210 (RTLH…ATVT), 211-402 (KELR…EELQ), and 403-601 (KYIQ…KLIS). His-22 is a Cu(2+) binding site. An N-linked (GlcNAc...) asparagine glycan is attached at Asn-42. 8 cysteine pairs are disulfide-bonded: Cys-99-Cys-114, Cys-113-Cys-124, Cys-148-Cys-193, Cys-192-Cys-201, Cys-224-Cys-270, Cys-269-Cys-277, Cys-289-Cys-303, and Cys-302-Cys-313. A phosphoserine mark is found at Ser-111, Ser-115, and Ser-117. A glycan (N-linked (GlcNAc...) asparagine) is linked at Asn-251. Residue Ser-344 is modified to Phosphoserine. 7 disulfide bridges follow: Cys-384/Cys-393, Cys-416/Cys-462, Cys-461/Cys-472, Cys-485/Cys-501, Cys-500/Cys-511, Cys-538/Cys-583, and Cys-582/Cys-591. A Phosphoserine modification is found at Ser-444.

This sequence belongs to the ALB/AFP/VDB family. In terms of assembly, dimeric and trimeric forms have been found in addition to the monomeric form. Plasma. Synthesized by the fetal liver and yolk sac.

It is found in the secreted. In terms of biological role, binds copper, nickel, and fatty acids as well as, and bilirubin less well than, serum albumin. This chain is Alpha-fetoprotein (AFP), found in Pan troglodytes (Chimpanzee).